The following is a 779-amino-acid chain: Putative helicase V13 (779 aa).

Residues 477–642 form the SF3 helicase domain; that stretch reads DNPKPFITSL…FVKEEELNEK (166 aa). 504–511 lines the ATP pocket; the sequence is GKSNAGKS.

This chain is Putative helicase V13, found in Acanthamoeba polyphaga (Amoeba).